The primary structure comprises 554 residues: Dihydroxy-acid dehydratase (554 aa).

D78 is a binding site for Mg(2+). Residue C119 coordinates [2Fe-2S] cluster. D120 and K121 together coordinate Mg(2+). K121 carries the post-translational modification N6-carboxylysine. C191 serves as a coordination point for [2Fe-2S] cluster. Mg(2+) is bound at residue E442. S468 functions as the Proton acceptor in the catalytic mechanism.

This sequence belongs to the IlvD/Edd family. As to quaternary structure, homodimer. The cofactor is [2Fe-2S] cluster. Requires Mg(2+) as cofactor.

The catalysed reaction is (2R)-2,3-dihydroxy-3-methylbutanoate = 3-methyl-2-oxobutanoate + H2O. The enzyme catalyses (2R,3R)-2,3-dihydroxy-3-methylpentanoate = (S)-3-methyl-2-oxopentanoate + H2O. It functions in the pathway amino-acid biosynthesis; L-isoleucine biosynthesis; L-isoleucine from 2-oxobutanoate: step 3/4. Its pathway is amino-acid biosynthesis; L-valine biosynthesis; L-valine from pyruvate: step 3/4. Its function is as follows. Functions in the biosynthesis of branched-chain amino acids. Catalyzes the dehydration of (2R,3R)-2,3-dihydroxy-3-methylpentanoate (2,3-dihydroxy-3-methylvalerate) into 2-oxo-3-methylpentanoate (2-oxo-3-methylvalerate) and of (2R)-2,3-dihydroxy-3-methylbutanoate (2,3-dihydroxyisovalerate) into 2-oxo-3-methylbutanoate (2-oxoisovalerate), the penultimate precursor to L-isoleucine and L-valine, respectively. The protein is Dihydroxy-acid dehydratase of Hydrogenobaculum sp. (strain Y04AAS1).